The chain runs to 441 residues: Cytochrome P450 monooxygenase cpsC (441 aa).

The interval 175–195 is disordered; the sequence is STTSQARKDETTATQQAGMEQ. The segment covering 186-195 has biased composition (polar residues); that stretch reads TATQQAGMEQ. Heme is bound at residue Cys377.

Belongs to the cytochrome P450 family. Heme is required as a cofactor.

It carries out the reaction campesine D + reduced [NADPH--hemoprotein reductase] + O2 = campesine G + oxidized [NADPH--hemoprotein reductase] + 2 H2O + H(+). It participates in alkaloid biosynthesis. Its function is as follows. Cytochrome P450 monooxygenase; part of the gene cluster that mediates the biosynthesis of campesine G, a dimeric indole piperazine alkaloid that shows good insecticidal activity Galleria mellonella. Within the pathway, cpsC catalyzes regioselective dehydrogenation reaction towards C2-N1 of the (2H)-indole ring of campesine D to yield the final product, campesine G. The non-canonical non-ribosomal peptide synthetase cpsA catalyzes the first steps of the pathway by producing L-tryptophanal and L-valinal from their respective amino-acids. These products condensate spontaneously to form trypyl-valyl pyrazine also known as didehydrocampesine A. The NmrA-like family domain-containing oxidoreductase cpsB is the next enzyme in cps pathway and reduces the unstable didehydrocampesine A to campesine A. The methyltransferase cpsF and the acetyltransferase cpsE both recognize N13 of piperazine ring to carry out methylation and acetylation of campesine A to produce campesine C and B, respectively. The cytochrome P450 monooxygenase cpsD then acts as a dimerase that catalyzes oxidative heterocoupling between campesine B and C to produce heterodimers with unexpected 6/5/6/6/6/6/5/6 eight-ring scaffold called campesine D. Finally,the cytochrome P450 monooxygenase cpsC is a regioselective dehydrogenase that catalyzes dehydrogenation reaction towards C2-N1 to produce campesine G. In Aspergillus campestris (strain IBT 28561), this protein is Cytochrome P450 monooxygenase cpsC.